The chain runs to 429 residues: MEVKKEQLEGNKVELKVEIEPERVDKALEQAYRKVVKNVSIPGFRKGKVPRRVLEARYGKEVLHRDAFDILVPPAYQEAVQAAEIEPIDRPEITDFYIEENKPATFSAVVEVKPEVELGEYKGLGIEKDEVEVTEEDIEAQLKSLQEQHSQLKSTDKEVVEEGDFVVIDFVGTIDGEEFQGGSAEEYNLEVGSGTFIPGFEEQLVGKKVGEETEVEVTFPEDYQAEDLAGKDAVFKVDIKEIKVKETPELDDEFAKEASEFDTLEELKDDIKERLTSQKEDRARRKLEDEIVDRVTENAEVDVPETLVNNELDMMYQNLAYSISSYGMKVEDYLKSMGLDEESWREENREEAEKRAKSNLVLEAIGKKEGIEVTDEEIDNKIEEIAKDGEQKPEQIKAYLQLQGQLEGLKHTIFVRKVIDFLVEHNQND.

A PPIase FKBP-type domain is found at 163–248; that stretch reads GDFVVIDFVG…IKEIKVKETP (86 aa).

It belongs to the FKBP-type PPIase family. Tig subfamily.

It is found in the cytoplasm. It carries out the reaction [protein]-peptidylproline (omega=180) = [protein]-peptidylproline (omega=0). In terms of biological role, involved in protein export. Acts as a chaperone by maintaining the newly synthesized protein in an open conformation. Functions as a peptidyl-prolyl cis-trans isomerase. This is Trigger factor from Halothermothrix orenii (strain H 168 / OCM 544 / DSM 9562).